The sequence spans 426 residues: Transcriptional enhancer factor TEF-1 (426 aa).

An N-acetylmethionine modification is found at methionine 1. Positions 1 to 12 are enriched in polar residues; that stretch reads MEPSSWSGSESP. Residues 1–31 form a disordered region; it reads MEPSSWSGSESPAENMERMSDSADKPIDNDA. Serine 11 carries the phosphoserine modification. Basic and acidic residues predominate over residues 15 to 28; sequence NMERMSDSADKPID. The segment at residues 28 to 104 is a DNA-binding region (TEA); sequence DNDAEGVWSP…QVLARRKSRD (77 aa). N6-lactoyllysine is present on lysine 108. Residues 167–426 form a transcriptional activation region; sequence GSSQDVKPFV…QHHIYRLVKD (260 aa).

Interacts with YAP1 and WWTR1/TAZ. Post-translationally, lactylation by AARS1 promotes nuclear localization and stabilization of YAP1, leading to increased Hippo signaling pathway. Delactylated by SIRT1. As to expression, in developing skeletal muscle and myocardium, in mitotic neuroblasts both in the brain and spinal cord. At later stages of embryogenesis expressed in several developing structures such as the olfactory system, the intestine, and the kidney.

The protein localises to the nucleus. In terms of biological role, transcription factor which plays a key role in the Hippo signaling pathway, a pathway involved in organ size control and tumor suppression by restricting proliferation and promoting apoptosis. The core of this pathway is composed of a kinase cascade wherein MST1/MST2, in complex with its regulatory protein SAV1, phosphorylates and activates LATS1/2 in complex with its regulatory protein MOB1, which in turn phosphorylates and inactivates YAP1 oncoprotein and WWTR1/TAZ. Acts by mediating gene expression of YAP1 and WWTR1/TAZ, thereby regulating cell proliferation, migration and epithelial mesenchymal transition (EMT) induction. Binds specifically and cooperatively to the SPH and GT-IIC 'enhansons' (5'-GTGGAATGT-3') and activates transcription in vivo in a cell-specific manner. The activation function appears to be mediated by a limiting cell-specific transcriptional intermediary factor (TIF). Involved in cardiac development. Binds to the M-CAT motif. This Mus musculus (Mouse) protein is Transcriptional enhancer factor TEF-1 (Tead1).